The sequence spans 127 residues: uncharacterized protein (127 aa).

The helical transmembrane segment at 84-103 (IALLSLFISLSIRITCFPFF) threads the bilayer.

The protein localises to the membrane. This is an uncharacterized protein from Saccharomyces cerevisiae (strain ATCC 204508 / S288c) (Baker's yeast).